The chain runs to 338 residues: Glycerol-3-phosphate dehydrogenase [NAD(P)+] (338 aa).

S13, W14, and K108 together coordinate NADPH. Sn-glycerol 3-phosphate-binding residues include K108, G139, and S141. NADPH is bound at residue A143. Residues K194, D247, S257, R258, and N259 each contribute to the sn-glycerol 3-phosphate site. K194 (proton acceptor) is an active-site residue. R258 is a binding site for NADPH. The NADPH site is built by V282 and E284.

Belongs to the NAD-dependent glycerol-3-phosphate dehydrogenase family.

The protein localises to the cytoplasm. The catalysed reaction is sn-glycerol 3-phosphate + NAD(+) = dihydroxyacetone phosphate + NADH + H(+). It catalyses the reaction sn-glycerol 3-phosphate + NADP(+) = dihydroxyacetone phosphate + NADPH + H(+). The protein operates within membrane lipid metabolism; glycerophospholipid metabolism. Functionally, catalyzes the reduction of the glycolytic intermediate dihydroxyacetone phosphate (DHAP) to sn-glycerol 3-phosphate (G3P), the key precursor for phospholipid synthesis. The protein is Glycerol-3-phosphate dehydrogenase [NAD(P)+] of Streptococcus pneumoniae (strain P1031).